The sequence spans 160 residues: Cytochrome b6-f complex subunit 4 (160 aa).

A run of 3 helical transmembrane segments spans residues 36 to 56 (LLYMFPVVILGTLFCLVSLAV), 95 to 115 (LIGILLMAGVPVGLATVPFIE), and 131 to 151 (AVFLFGTLVAIWLGIGATLPI).

Belongs to the cytochrome b family. PetD subfamily. The 4 large subunits of the cytochrome b6-f complex are cytochrome b6, subunit IV (17 kDa polypeptide, petD), cytochrome f and the Rieske protein, while the 4 small subunits are petG, petL, petM and petN. The complex functions as a dimer.

It localises to the plastid. The protein resides in the chloroplast thylakoid membrane. In terms of biological role, component of the cytochrome b6-f complex, which mediates electron transfer between photosystem II (PSII) and photosystem I (PSI), cyclic electron flow around PSI, and state transitions. This is Cytochrome b6-f complex subunit 4 from Bigelowiella natans (Pedinomonas minutissima).